The sequence spans 207 residues: Ribosomal RNA large subunit methyltransferase E (207 aa).

5 residues coordinate S-adenosyl-L-methionine: glycine 60, tryptophan 62, aspartate 80, aspartate 96, and aspartate 121. Lysine 161 functions as the Proton acceptor in the catalytic mechanism.

Belongs to the class I-like SAM-binding methyltransferase superfamily. RNA methyltransferase RlmE family.

Its subcellular location is the cytoplasm. It carries out the reaction uridine(2552) in 23S rRNA + S-adenosyl-L-methionine = 2'-O-methyluridine(2552) in 23S rRNA + S-adenosyl-L-homocysteine + H(+). Functionally, specifically methylates the uridine in position 2552 of 23S rRNA at the 2'-O position of the ribose in the fully assembled 50S ribosomal subunit. The sequence is that of Ribosomal RNA large subunit methyltransferase E from Thioalkalivibrio sulfidiphilus (strain HL-EbGR7).